The following is a 201-amino-acid chain: Small ribosomal subunit protein uS4c (201 aa).

The 62-residue stretch at 89–150 (MRLDNIVFRL…RQKSQAIITK (62 aa)) folds into the S4 RNA-binding domain.

Belongs to the universal ribosomal protein uS4 family. In terms of assembly, part of the 30S ribosomal subunit. Contacts protein S5. The interaction surface between S4 and S5 is involved in control of translational fidelity.

The protein localises to the plastid. It localises to the chloroplast. One of the primary rRNA binding proteins, it binds directly to 16S rRNA where it nucleates assembly of the body of the 30S subunit. Functionally, with S5 and S12 plays an important role in translational accuracy. This Physcomitrium patens (Spreading-leaved earth moss) protein is Small ribosomal subunit protein uS4c (rps4).